A 168-amino-acid chain; its full sequence is Probable chorismate pyruvate-lyase (168 aa).

Substrate-binding residues include arginine 75, isoleucine 114, and glutamate 155.

This sequence belongs to the UbiC family.

It is found in the cytoplasm. The catalysed reaction is chorismate = 4-hydroxybenzoate + pyruvate. It functions in the pathway cofactor biosynthesis; ubiquinone biosynthesis. Removes the pyruvyl group from chorismate, with concomitant aromatization of the ring, to provide 4-hydroxybenzoate (4HB) for the ubiquinone pathway. This is Probable chorismate pyruvate-lyase from Psychrobacter arcticus (strain DSM 17307 / VKM B-2377 / 273-4).